The primary structure comprises 87 residues: Small ribosomal subunit protein bS20 (87 aa).

Positions 1–22 (MANIKSQIKRNKTNEKARLRNQ) are disordered.

This sequence belongs to the bacterial ribosomal protein bS20 family.

In terms of biological role, binds directly to 16S ribosomal RNA. The protein is Small ribosomal subunit protein bS20 of Corynebacterium glutamicum (strain R).